A 992-amino-acid chain; its full sequence is RNA-binding motif protein, X-linked-like-3 (992 aa).

The region spanning 8 to 86 (EKLFVGGLNL…KAIMVAQTIK (79 aa)) is the RRM domain. 7 disordered regions span residues 91 to 130 (SSRWVPPTPGSGSRSRFSHRTRGGGSSPQRPPSQGRPDDG), 144 to 169 (APMPRKRGPPPRHCASPPHKRRDPGD), 188 to 207 (PDYCPXRGDGNRNGYRGRDH), 278 to 385 (DHLP…DSSS), 397 to 511 (EEYQ…HRYR), 562 to 588 (SLDANSGGRSPNAYSGGHDSSSRSHRY), and 644 to 992 (NSGG…QSRY). A compositionally biased stretch (low complexity) spans 284–296 (YSGGRSSSSNSYS). The span at 297–316 (RSDRYGEEGCYEEYRGRSPD) shows a compositional bias: basic and acidic residues. Over residues 318-334 (HSGGRNSSSNSYGQSHH) the composition is skewed to low complexity. The span at 335-371 (YGGEGRYEEYRGRYEEYRGRSHEARSGGRSTDAHSGG) shows a compositional bias: basic and acidic residues. Residues 454–471 (THSGGRSSSSNSYGQSHR) are compositionally biased toward low complexity. The segment covering 472–488 (YGGEGHYEYRGRSHDAH) has biased composition (basic and acidic residues). 3 stretches are compositionally biased toward polar residues: residues 564 to 574 (DANSGGRSPNA), 644 to 664 (NSGGCSPNAYSGGHDSSSQSH), and 752 to 774 (DANSGGRSPNAYSGGRDSSSNSY). Over residues 785–798 (HYEEYRGRSHDTHS) the composition is skewed to basic and acidic residues. A compositionally biased stretch (polar residues) spans 818-828 (GRNSFSNSYGQ). 3 stretches are compositionally biased toward basic and acidic residues: residues 831–842 (HYGRGGRYEEYQ), 920–948 (SGDHDRSSNSYGRSDRYSRGRDRVGRPDR), and 981–992 (GRFERGEGQSRY).

The sequence is that of RNA-binding motif protein, X-linked-like-3 (RBMXL3) from Pan troglodytes (Chimpanzee).